The chain runs to 508 residues: Maturase K (508 aa).

Belongs to the intron maturase 2 family. MatK subfamily.

Its subcellular location is the plastid. It is found in the chloroplast. Its function is as follows. Usually encoded in the trnK tRNA gene intron. Probably assists in splicing its own and other chloroplast group II introns. The protein is Maturase K of Verbena rigida (Tuberous vervain).